A 264-amino-acid polypeptide reads, in one-letter code: Thymidylate synthase (264 aa).

Arginine 21 is a binding site for dUMP. Position 51 (histidine 51) interacts with (6R)-5,10-methylene-5,6,7,8-tetrahydrofolate. Arginine 126–arginine 127 contacts dUMP. The active-site Nucleophile is the cysteine 146. DUMP contacts are provided by residues arginine 166–aspartate 169, asparagine 177, and histidine 207–tyrosine 209. Aspartate 169 provides a ligand contact to (6R)-5,10-methylene-5,6,7,8-tetrahydrofolate. Alanine 263 lines the (6R)-5,10-methylene-5,6,7,8-tetrahydrofolate pocket.

The protein belongs to the thymidylate synthase family. Bacterial-type ThyA subfamily. In terms of assembly, homodimer.

It is found in the cytoplasm. It carries out the reaction dUMP + (6R)-5,10-methylene-5,6,7,8-tetrahydrofolate = 7,8-dihydrofolate + dTMP. Its pathway is pyrimidine metabolism; dTTP biosynthesis. Functionally, catalyzes the reductive methylation of 2'-deoxyuridine-5'-monophosphate (dUMP) to 2'-deoxythymidine-5'-monophosphate (dTMP) while utilizing 5,10-methylenetetrahydrofolate (mTHF) as the methyl donor and reductant in the reaction, yielding dihydrofolate (DHF) as a by-product. This enzymatic reaction provides an intracellular de novo source of dTMP, an essential precursor for DNA biosynthesis. This chain is Thymidylate synthase, found in Yersinia pestis bv. Antiqua (strain Antiqua).